A 208-amino-acid polypeptide reads, in one-letter code: Ribonuclease HII (208 aa).

Positions 12–201 constitute an RNase H type-2 domain; sequence ELVAGVDEVG…VRALLEPVAV (190 aa). A divalent metal cation-binding residues include aspartate 18, glutamate 19, and aspartate 110.

Belongs to the RNase HII family. Mn(2+) is required as a cofactor. Mg(2+) serves as cofactor.

It localises to the cytoplasm. The enzyme catalyses Endonucleolytic cleavage to 5'-phosphomonoester.. Endonuclease that specifically degrades the RNA of RNA-DNA hybrids. The sequence is that of Ribonuclease HII from Ectopseudomonas mendocina (strain ymp) (Pseudomonas mendocina).